Consider the following 381-residue polypeptide: Alkanesulfonate monooxygenase (381 aa).

It belongs to the SsuD family. As to quaternary structure, homotetramer.

It catalyses the reaction an alkanesulfonate + FMNH2 + O2 = an aldehyde + FMN + sulfite + H2O + 2 H(+). Functionally, catalyzes the desulfonation of aliphatic sulfonates. In Escherichia coli O17:K52:H18 (strain UMN026 / ExPEC), this protein is Alkanesulfonate monooxygenase.